Consider the following 518-residue polypeptide: Putative ribose/galactose/methyl galactoside import ATP-binding protein (518 aa).

The tract at residues Met1 to Pro22 is disordered. The segment covering Arg12 to Pro22 has biased composition (polar residues). 2 consecutive ABC transporter domains span residues Leu29–Glu265 and Val275–Leu515. Gly61–Ser68 contacts ATP.

This sequence belongs to the ABC transporter superfamily. Carbohydrate importer 2 (CUT2) (TC 3.A.1.2) family.

The protein resides in the cell inner membrane. It carries out the reaction D-ribose(out) + ATP + H2O = D-ribose(in) + ADP + phosphate + H(+). It catalyses the reaction D-galactose(out) + ATP + H2O = D-galactose(in) + ADP + phosphate + H(+). In terms of biological role, part of an ABC transporter complex involved in carbohydrate import. Could be involved in ribose, galactose and/or methyl galactoside import. Responsible for energy coupling to the transport system. This is Putative ribose/galactose/methyl galactoside import ATP-binding protein from Ralstonia nicotianae (strain ATCC BAA-1114 / GMI1000) (Ralstonia solanacearum).